Here is a 1003-residue protein sequence, read N- to C-terminus: Glycine--tRNA ligase (1003 aa).

Residues 1 to 310 (MSSQPLTLQT…VTPKKIPTIC (310 aa)) form a glycine--tRNA ligase alpha subunit region. The tract at residues 311 to 1003 (QPEDFLLEIG…CFGFYAWGVL (693 aa)) is glycine--tRNA ligase beta subunit.

This sequence belongs to the class-II aminoacyl-tRNA synthetase family.

Its subcellular location is the cytoplasm. The enzyme catalyses tRNA(Gly) + glycine + ATP = glycyl-tRNA(Gly) + AMP + diphosphate. In Chlamydia trachomatis serovar D (strain ATCC VR-885 / DSM 19411 / UW-3/Cx), this protein is Glycine--tRNA ligase (glyQS).